The following is a 284-amino-acid chain: RNase adapter protein RapZ (284 aa).

Position 8 to 15 (Gly8 to Ser15) interacts with ATP. Position 56-59 (Asp56–Asn59) interacts with GTP. Positions Arg266–Ser284 are RNA-binding.

It belongs to the RapZ-like family. RapZ subfamily. Homotrimer.

Modulates the synthesis of GlmS, by affecting the processing and stability of the regulatory small RNA GlmZ. When glucosamine-6-phosphate (GlcN6P) concentrations are high in the cell, RapZ binds GlmZ and targets it to cleavage by RNase E. Consequently, GlmZ is inactivated and unable to activate GlmS synthesis. Under low GlcN6P concentrations, RapZ is sequestered and inactivated by an other regulatory small RNA, GlmY, preventing GlmZ degradation and leading to synthesis of GlmS. The chain is RNase adapter protein RapZ from Erwinia tasmaniensis (strain DSM 17950 / CFBP 7177 / CIP 109463 / NCPPB 4357 / Et1/99).